The sequence spans 155 residues: Protein archease-like (155 aa).

3 residues coordinate Ca(2+): D26, D154, and I155.

The protein belongs to the archease family.

Functionally, component of the tRNA-splicing ligase complex required to facilitate the enzymatic turnover of catalytic subunit RtcB. This Caenorhabditis briggsae protein is Protein archease-like.